A 60-amino-acid chain; its full sequence is Large ribosomal subunit protein eL37 (60 aa).

Cys19, Cys22, Cys34, and Cys37 together coordinate Zn(2+). A C4-type zinc finger spans residues 19–37 (CRRCGRMSYHKRHKICSSC).

The protein belongs to the eukaryotic ribosomal protein eL37 family. It depends on Zn(2+) as a cofactor.

Its function is as follows. Binds to the 23S rRNA. This is Large ribosomal subunit protein eL37 from Methanospirillum hungatei JF-1 (strain ATCC 27890 / DSM 864 / NBRC 100397 / JF-1).